The following is a 143-amino-acid chain: Transcription antitermination protein NusB (143 aa).

This sequence belongs to the NusB family.

Its function is as follows. Involved in transcription antitermination. Required for transcription of ribosomal RNA (rRNA) genes. Binds specifically to the boxA antiterminator sequence of the ribosomal RNA (rrn) operons. This is Transcription antitermination protein NusB from Anaeromyxobacter sp. (strain Fw109-5).